The sequence spans 451 residues: Aspartate aminotransferase, mitochondrial (451 aa).

L-aspartate contacts are provided by Gly-52, Trp-155, and Asn-216. At Lys-286 the chain carries N6-(pyridoxal phosphate)lysine. L-aspartate is bound at residue Arg-423.

It belongs to the class-I pyridoxal-phosphate-dependent aminotransferase family. As to quaternary structure, homodimer. It depends on pyridoxal 5'-phosphate as a cofactor.

Its subcellular location is the mitochondrion matrix. The enzyme catalyses L-aspartate + 2-oxoglutarate = oxaloacetate + L-glutamate. Functionally, plays a key role in amino acid metabolism. Important for metabolite exchange between mitochondria and cytosol. The protein is Aspartate aminotransferase, mitochondrial (AAT1) of Saccharomyces cerevisiae (strain ATCC 204508 / S288c) (Baker's yeast).